Reading from the N-terminus, the 205-residue chain is dITP/XTP pyrophosphatase (205 aa).

11 to 16 is a binding site for substrate; sequence TKNMGK. Mg(2+)-binding residues include Glu-44 and Asp-73. The active-site Proton acceptor is Asp-73. Substrate is bound by residues Ser-74, 158–161, Lys-181, and 186–187; these read FGYD and HR.

Belongs to the HAM1 NTPase family. In terms of assembly, homodimer. The cofactor is Mg(2+).

It catalyses the reaction XTP + H2O = XMP + diphosphate + H(+). The catalysed reaction is dITP + H2O = dIMP + diphosphate + H(+). The enzyme catalyses ITP + H2O = IMP + diphosphate + H(+). Functionally, pyrophosphatase that catalyzes the hydrolysis of nucleoside triphosphates to their monophosphate derivatives, with a high preference for the non-canonical purine nucleotides XTP (xanthosine triphosphate), dITP (deoxyinosine triphosphate) and ITP. Seems to function as a house-cleaning enzyme that removes non-canonical purine nucleotides from the nucleotide pool, thus preventing their incorporation into DNA/RNA and avoiding chromosomal lesions. This is dITP/XTP pyrophosphatase from Bacillus cereus (strain ATCC 14579 / DSM 31 / CCUG 7414 / JCM 2152 / NBRC 15305 / NCIMB 9373 / NCTC 2599 / NRRL B-3711).